The chain runs to 50 residues: Thrombin-like enzyme BpirSP41 (50 aa).

The 50-residue stretch at 1-50 (VVGGDECDINEHPFLAFLYSHGYFCGLTLINQEWVLTAAHCDRRFMRIYL) folds into the Peptidase S1 domain. A disulfide bridge links C25 with C41. H40 serves as the catalytic Charge relay system.

This sequence belongs to the peptidase S1 family. Snake venom subfamily. As to quaternary structure, monomer. Post-translationally, N-glycosylated. Expressed by the venom gland.

It localises to the secreted. With respect to regulation, inhibited by serine protease inhibitors PMSF, benzamidine, leupeptin and aprotinin, as well as by copper ions (Cu2+). Not inhibited by metalloprotease inhibitors EDTA, EGTA and 1,10-phenanthroline, as well as by barium (Ba2+) and calcium ion (Ca2+). Functionally, snake venom serine protease that interferes with the hemostatic system of the prey. It almost completely degrades both Aalpha (FGA) and Bbeta (FGB) chains of fibrinogen. It presents a higher ability to degrade fibrin clots than BpirSP27. It hydrolyzes chromogenic substrates S-2238 (used for testing thrombin activity), S-2222 (factor Xa), S-2266 (glandular kallikrein and factor XIa), and S-2302 (plasma kallikrein, factor XIa and XIIa). It shows a decrease in the clotting time of human plasma in the presence of increasing doses of the enzyme. Its minimum coagulant dose (MCD) is 20 ug. It promotes platelet aggregation with a maximum of aggregation of 20%, regardless of the concentration increase or the presence of calcium. It also shows 40% inhibition of the hemolytic activity promoted by the complement pathways and possess only a minor role in the induction of edema and pain in rat. This chain is Thrombin-like enzyme BpirSP41, found in Bothrops pirajai (Piraja's lancehead).